The sequence spans 547 residues: CTP synthase (547 aa).

The interval 1 to 265 (MARYVFITGG…DQAVLDAFGI (265 aa)) is amidoligase domain. Position 13 (serine 13) interacts with CTP. Serine 13 is a UTP binding site. ATP contacts are provided by residues 14–19 (SLGKGL) and aspartate 71. Mg(2+) is bound by residues aspartate 71 and glutamate 139. Residues 146 to 148 (DIE), 186 to 191 (KTKPTQ), and lysine 222 each bind CTP. Residues 186–191 (KTKPTQ) and lysine 222 each bind UTP. Residues 291 to 546 (RVAIVGKYTQ…VRAAVEVSRL (256 aa)) form the Glutamine amidotransferase type-1 domain. Glycine 353 is an L-glutamine binding site. Residue cysteine 380 is the Nucleophile; for glutamine hydrolysis of the active site. L-glutamine contacts are provided by residues 381–384 (LGMQ), glutamate 404, and arginine 474. Catalysis depends on residues histidine 519 and glutamate 521.

It belongs to the CTP synthase family. As to quaternary structure, homotetramer.

The catalysed reaction is UTP + L-glutamine + ATP + H2O = CTP + L-glutamate + ADP + phosphate + 2 H(+). It carries out the reaction L-glutamine + H2O = L-glutamate + NH4(+). The enzyme catalyses UTP + NH4(+) + ATP = CTP + ADP + phosphate + 2 H(+). It functions in the pathway pyrimidine metabolism; CTP biosynthesis via de novo pathway; CTP from UDP: step 2/2. With respect to regulation, allosterically activated by GTP, when glutamine is the substrate; GTP has no effect on the reaction when ammonia is the substrate. The allosteric effector GTP functions by stabilizing the protein conformation that binds the tetrahedral intermediate(s) formed during glutamine hydrolysis. Inhibited by the product CTP, via allosteric rather than competitive inhibition. Its function is as follows. Catalyzes the ATP-dependent amination of UTP to CTP with either L-glutamine or ammonia as the source of nitrogen. Regulates intracellular CTP levels through interactions with the four ribonucleotide triphosphates. The sequence is that of CTP synthase from Cereibacter sphaeroides (strain ATCC 17029 / ATH 2.4.9) (Rhodobacter sphaeroides).